A 244-amino-acid chain; its full sequence is tRNA pseudouridine synthase C (244 aa).

Aspartate 54 is a catalytic residue.

This sequence belongs to the pseudouridine synthase RluA family.

It carries out the reaction uridine(65) in tRNA = pseudouridine(65) in tRNA. Its function is as follows. Responsible for synthesis of pseudouridine from uracil-65 in transfer RNAs. This chain is tRNA pseudouridine synthase C (truC), found in Vibrio cholerae serotype O1 (strain ATCC 39315 / El Tor Inaba N16961).